A 110-amino-acid chain; its full sequence is Large ribosomal subunit protein P2 (110 aa).

A disordered region spans residues 63–110 (ASVPSGGGVAAAAPAAGGGGADPAEAKEEKKEEPEEESDDDMGFGLFD). A compositionally biased stretch (basic and acidic residues) spans 86-95 (AEAKEEKKEE).

It belongs to the eukaryotic ribosomal protein P1/P2 family. P1 and P2 exist as dimers at the large ribosomal subunit. Post-translationally, phosphorylated.

Plays an important role in the elongation step of protein synthesis. The protein is Large ribosomal subunit protein P2 of Cryptochiton stelleri (Giant gumboot chiton).